A 201-amino-acid polypeptide reads, in one-letter code: Small ribosomal subunit protein uS4c (201 aa).

Residues 15–43 (LGALPGLTSKRPTPGSDLRNQSRSGKRSQ) form a disordered region. Positions 89-149 (MRLDNILFRL…DEQKSRALIQ (61 aa)) constitute an S4 RNA-binding domain.

This sequence belongs to the universal ribosomal protein uS4 family. As to quaternary structure, part of the 30S ribosomal subunit. Contacts protein S5. The interaction surface between S4 and S5 is involved in control of translational fidelity.

It localises to the plastid. Its subcellular location is the chloroplast. Its function is as follows. One of the primary rRNA binding proteins, it binds directly to 16S rRNA where it nucleates assembly of the body of the 30S subunit. Functionally, with S5 and S12 plays an important role in translational accuracy. The protein is Small ribosomal subunit protein uS4c (rps4) of Nandina domestica (Heavenly bamboo).